The sequence spans 156 residues: uncharacterized protein (156 aa).

The span at 1-12 (MSSRFARSNGNP) shows a compositional bias: polar residues. A disordered region spans residues 1–27 (MSSRFARSNGNPNHIRKRNHSPDPIGI). At Ser-21 the chain carries Phosphoserine.

It is found in the cytoplasm. The protein localises to the nucleus. This is an uncharacterized protein from Saccharomyces cerevisiae (strain ATCC 204508 / S288c) (Baker's yeast).